Reading from the N-terminus, the 355-residue chain is S-adenosylmethionine:tRNA ribosyltransferase-isomerase (355 aa).

Belongs to the QueA family. In terms of assembly, monomer.

Its subcellular location is the cytoplasm. The enzyme catalyses 7-aminomethyl-7-carbaguanosine(34) in tRNA + S-adenosyl-L-methionine = epoxyqueuosine(34) in tRNA + adenine + L-methionine + 2 H(+). The protein operates within tRNA modification; tRNA-queuosine biosynthesis. Functionally, transfers and isomerizes the ribose moiety from AdoMet to the 7-aminomethyl group of 7-deazaguanine (preQ1-tRNA) to give epoxyqueuosine (oQ-tRNA). This chain is S-adenosylmethionine:tRNA ribosyltransferase-isomerase, found in Burkholderia ambifaria (strain MC40-6).